The chain runs to 168 residues: MPTLLLGASIPFGTIAYTLFIFLLLLVMLRKFAWGPLMGIMKEREEHVTNEIDAAERSNAEAKKLVEEQREMLKQSRVEAQELIERAKKQAVDQKDVIVAAAKEEAESIKTSAVQEIQREKEQAIAALQEQVASLSVHIASKVIEKELKEEDQVKLIRDYIKEVGEAR.

The chain crosses the membrane as a helical span at residues 9–29 (SIPFGTIAYTLFIFLLLLVML).

Belongs to the ATPase B chain family. In terms of assembly, F-type ATPases have 2 components, F(1) - the catalytic core - and F(0) - the membrane proton channel. F(1) has five subunits: alpha(3), beta(3), gamma(1), delta(1), epsilon(1). F(0) has three main subunits: a(1), b(2) and c(10-14). The alpha and beta chains form an alternating ring which encloses part of the gamma chain. F(1) is attached to F(0) by a central stalk formed by the gamma and epsilon chains, while a peripheral stalk is formed by the delta and b chains.

It is found in the cell membrane. Its function is as follows. F(1)F(0) ATP synthase produces ATP from ADP in the presence of a proton or sodium gradient. F-type ATPases consist of two structural domains, F(1) containing the extramembraneous catalytic core and F(0) containing the membrane proton channel, linked together by a central stalk and a peripheral stalk. During catalysis, ATP synthesis in the catalytic domain of F(1) is coupled via a rotary mechanism of the central stalk subunits to proton translocation. In terms of biological role, component of the F(0) channel, it forms part of the peripheral stalk, linking F(1) to F(0). The chain is ATP synthase subunit b from Bacillus mycoides (strain KBAB4) (Bacillus weihenstephanensis).